Reading from the N-terminus, the 126-residue chain is Chorion class B protein M1768 (126 aa).

Residues 1–17 are left arm; it reads YGGLGYGGLGGGCGRGF. The central domain stretch occupies residues 18–86; sequence SGGGLPVATA…GNGAVGITRE (69 aa). The right arm (Gly-rich tandem repeats) stretch occupies residues 87–126; it reads GGFGYGAGYGDGYGLGFGGYGGGYGLGYGGYGGCGCSWGY.

This sequence belongs to the chorion protein family.

Functionally, this protein is one of many from the eggshell of the silk moth. The chain is Chorion class B protein M1768 from Bombyx mori (Silk moth).